Reading from the N-terminus, the 104-residue chain is Nucleoid-associated protein LSL_1227 (104 aa).

Over residues 1–19 (MMMRGMNMQSMMKQMQKLQ) the composition is skewed to low complexity. The interval 1–24 (MMMRGMNMQSMMKQMQKLQKNMKK) is disordered.

The protein belongs to the YbaB/EbfC family. In terms of assembly, homodimer.

It is found in the cytoplasm. Its subcellular location is the nucleoid. Its function is as follows. Binds to DNA and alters its conformation. May be involved in regulation of gene expression, nucleoid organization and DNA protection. The sequence is that of Nucleoid-associated protein LSL_1227 from Ligilactobacillus salivarius (strain UCC118) (Lactobacillus salivarius).